An 875-amino-acid polypeptide reads, in one-letter code: Alanine--tRNA ligase (875 aa).

Zn(2+) contacts are provided by His563, His567, Cys665, and His669.

This sequence belongs to the class-II aminoacyl-tRNA synthetase family. Zn(2+) is required as a cofactor.

It localises to the cytoplasm. The catalysed reaction is tRNA(Ala) + L-alanine + ATP = L-alanyl-tRNA(Ala) + AMP + diphosphate. Catalyzes the attachment of alanine to tRNA(Ala) in a two-step reaction: alanine is first activated by ATP to form Ala-AMP and then transferred to the acceptor end of tRNA(Ala). Also edits incorrectly charged Ser-tRNA(Ala) and Gly-tRNA(Ala) via its editing domain. In Desulfitobacterium hafniense (strain Y51), this protein is Alanine--tRNA ligase.